Consider the following 225-residue polypeptide: Cbp/p300-interacting transactivator 2 (225 aa).

The protein belongs to the CITED family.

The protein resides in the nucleus. In terms of biological role, transcriptional coactivator or corepressor of the p300/CBP-mediated transcription complex. May be involved in sex determination, early gonad development, left-right patterning during embryogenesis and differentiation of the adrenal cortex. This chain is Cbp/p300-interacting transactivator 2 (cited2), found in Xenopus tropicalis (Western clawed frog).